Consider the following 602-residue polypeptide: MTPLDHIRNFSIIAHIDHGKSTLADRLIQTTGGLTAREMSEQVLDNMDIEKERGITIKAQTVRLDYTAKDGQKYVLNLMDTPGHVDFAYEVSRSLAACEGALLVVDASQGVEAQTLANVYQSIEYDHEIVPVINKIDLPAAEPEKVKQEIEEIIGLPADDAVLASAKSGIGIDDILEALVKRIPAPKGDINAPLKAMLVDSWYDPYLGVVILVRIIDGSLKKGQQIRFMQAGTTHLIDRVGCFRPKIEILDSLGPGEIGFITAQIKEVSQTAVGDTITDAKNPTSTPLPGFKQVQPVVFCGLFPVDAADFDKLKESLGKLRLNDASFSFEAENSAALGFGFRCGFLGLLHLEIIQERLSREYDLDLITTAPSVVYHLNMTHGEGSIDLHNPADMPDVTRIDSIDEPWIEATIYVPDQYLGAVLKLCQDRRGIQKDMTYVGGRVQLLYELPLNEVVFDFYDRLKSISRGYASFDYHQIGYREGDLVKMTIMVNGEVVDALSMIVHRHAAEGRGRQMCQRMKDLIPRHLFKIPIQAAIGGKVIARETIGAMRKDVTAKCYGGDISRKKKLLEKQKEGKKRMRQYGSVDIPQEAFIAALRMGDDS.

The tr-type G domain occupies 5 to 187; it reads DHIRNFSIIA…ALVKRIPAPK (183 aa). GTP contacts are provided by residues 17 to 22 and 134 to 137; these read DHGKST and NKID.

It belongs to the TRAFAC class translation factor GTPase superfamily. Classic translation factor GTPase family. LepA subfamily.

The protein resides in the cell inner membrane. The enzyme catalyses GTP + H2O = GDP + phosphate + H(+). Its function is as follows. Required for accurate and efficient protein synthesis under certain stress conditions. May act as a fidelity factor of the translation reaction, by catalyzing a one-codon backward translocation of tRNAs on improperly translocated ribosomes. Back-translocation proceeds from a post-translocation (POST) complex to a pre-translocation (PRE) complex, thus giving elongation factor G a second chance to translocate the tRNAs correctly. Binds to ribosomes in a GTP-dependent manner. This is Elongation factor 4 from Zymomonas mobilis subsp. mobilis (strain ATCC 31821 / ZM4 / CP4).